A 186-amino-acid chain; its full sequence is Adenine phosphoribosyltransferase (186 aa).

132 to 136 (ATGGS) contributes to the AMP binding site.

It belongs to the purine/pyrimidine phosphoribosyltransferase family. In terms of assembly, homodimer. It depends on Mg(2+) as a cofactor.

Its subcellular location is the cytoplasm. The protein localises to the nucleus. The enzyme catalyses AMP + diphosphate = 5-phospho-alpha-D-ribose 1-diphosphate + adenine. The protein operates within purine metabolism; AMP biosynthesis via salvage pathway; AMP from adenine: step 1/1. Its function is as follows. Catalyzes a salvage reaction resulting in the formation of AMP, that is energically less costly than de novo synthesis. The chain is Adenine phosphoribosyltransferase (APT1) from Debaryomyces hansenii (strain ATCC 36239 / CBS 767 / BCRC 21394 / JCM 1990 / NBRC 0083 / IGC 2968) (Yeast).